The following is a 65-amino-acid chain: Large ribosomal subunit protein bL35 (65 aa).

This sequence belongs to the bacterial ribosomal protein bL35 family.

The polypeptide is Large ribosomal subunit protein bL35 (Prochlorococcus marinus (strain NATL1A)).